Here is a 91-residue protein sequence, read N- to C-terminus: ATP synthase subunit c 1 (91 aa).

Transmembrane regions (helical) follow at residues 4–24 (FTMC…GTAI) and 53–73 (IGLA…LIIL).

It belongs to the ATPase C chain family. As to quaternary structure, F-type ATPases have 2 components, F(1) - the catalytic core - and F(0) - the membrane proton channel. F(1) has five subunits: alpha(3), beta(3), gamma(1), delta(1), epsilon(1). F(0) has three main subunits: a(1), b(2) and c(10-14). The alpha and beta chains form an alternating ring which encloses part of the gamma chain. F(1) is attached to F(0) by a central stalk formed by the gamma and epsilon chains, while a peripheral stalk is formed by the delta and b chains.

Its subcellular location is the cell inner membrane. Its function is as follows. F(1)F(0) ATP synthase produces ATP from ADP in the presence of a proton or sodium gradient. F-type ATPases consist of two structural domains, F(1) containing the extramembraneous catalytic core and F(0) containing the membrane proton channel, linked together by a central stalk and a peripheral stalk. During catalysis, ATP synthesis in the catalytic domain of F(1) is coupled via a rotary mechanism of the central stalk subunits to proton translocation. In terms of biological role, key component of the F(0) channel; it plays a direct role in translocation across the membrane. A homomeric c-ring of between 10-14 subunits forms the central stalk rotor element with the F(1) delta and epsilon subunits. The sequence is that of ATP synthase subunit c 1 from Pelobacter propionicus (strain DSM 2379 / NBRC 103807 / OttBd1).